The primary structure comprises 486 residues: 2-succinylbenzoate--CoA ligase (486 aa).

The protein belongs to the ATP-dependent AMP-binding enzyme family. MenE subfamily.

The catalysed reaction is 2-succinylbenzoate + ATP + CoA = 2-succinylbenzoyl-CoA + AMP + diphosphate. It participates in quinol/quinone metabolism; 1,4-dihydroxy-2-naphthoate biosynthesis; 1,4-dihydroxy-2-naphthoate from chorismate: step 5/7. Its pathway is quinol/quinone metabolism; menaquinone biosynthesis. Its function is as follows. Converts 2-succinylbenzoate (OSB) to 2-succinylbenzoyl-CoA (OSB-CoA). This Bacillus subtilis (strain 168) protein is 2-succinylbenzoate--CoA ligase.